The primary structure comprises 99 residues: Aspartyl/glutamyl-tRNA(Asn/Gln) amidotransferase subunit C (99 aa).

Belongs to the GatC family. As to quaternary structure, heterotrimer of A, B and C subunits.

It catalyses the reaction L-glutamyl-tRNA(Gln) + L-glutamine + ATP + H2O = L-glutaminyl-tRNA(Gln) + L-glutamate + ADP + phosphate + H(+). It carries out the reaction L-aspartyl-tRNA(Asn) + L-glutamine + ATP + H2O = L-asparaginyl-tRNA(Asn) + L-glutamate + ADP + phosphate + 2 H(+). Functionally, allows the formation of correctly charged Asn-tRNA(Asn) or Gln-tRNA(Gln) through the transamidation of misacylated Asp-tRNA(Asn) or Glu-tRNA(Gln) in organisms which lack either or both of asparaginyl-tRNA or glutaminyl-tRNA synthetases. The reaction takes place in the presence of glutamine and ATP through an activated phospho-Asp-tRNA(Asn) or phospho-Glu-tRNA(Gln). The chain is Aspartyl/glutamyl-tRNA(Asn/Gln) amidotransferase subunit C from Paraburkholderia phymatum (strain DSM 17167 / CIP 108236 / LMG 21445 / STM815) (Burkholderia phymatum).